Here is a 415-residue protein sequence, read N- to C-terminus: Vascular endothelial growth factor C (415 aa).

Residues 1–31 form the signal peptide; sequence MHLLCFLSLACSLLAAALIPSPREAPATVAA. The propeptide occupies 32-107; it reads FESGLGFSEA…RTGDSVKFAA (76 aa). 3 cysteine pairs are disulfide-bonded: cysteine 127–cysteine 169, cysteine 158–cysteine 205, and cysteine 162–cysteine 207. Residues asparagine 171, asparagine 201, and asparagine 236 are each glycosylated (N-linked (GlcNAc...) asparagine). Residues 224 to 415 constitute a propeptide that is removed on maturation; sequence SLPATLPQCQ…PSYWKRPHLN (192 aa). A run of 4 repeats spans residues 276–291, 300–315, 324–339, and 343–358. Residues 276–358 form a 4 X 16 AA repeats of C-X(10)-C-X-C-X(1,3)-C region; it reads CGPNKELDED…LNPGKCACEC (83 aa).

This sequence belongs to the PDGF/VEGF growth factor family. Homodimer; non-covalent and antiparallel. Interacts with FLT4/VEGFR3; the interaction is required for FLT4/VEGFR3 homodimarization and activation. Post-translationally, undergoes a complex proteolytic maturation which generates a variety of processed secreted forms with increased activity toward VEGFR-3, but only the fully processed form could activate VEGFR-2. VEGF-C first form an antiparallel homodimer linked by disulfide bonds. Before secretion, a cleavage occurs between Arg-223 and Ser-224 producing a heterotetramer. The next extracellular step of the processing removes the N-terminal propeptide. Finally the mature VEGF-C is composed mostly of two VEGF homology domains (VHDs) bound by non-covalent interactions. As to expression, expressed in adult heart, brain, spleen, lung, liver, skeletal muscle, kidney, testis and intestine with higher levels in heart, brain and kidney. Isoform 4 levels are very low. Isoform 3 is mostly expressed in liver and has reduced expression level in other tissues. Isoform 2 is mostly expressed in brain and kidney, although a lower level expression in other tissues is also detectable.

The protein resides in the secreted. Its function is as follows. Growth factor active in angiogenesis, and endothelial cell growth, stimulating their proliferation and migration and also has effects on the permeability of blood vessels. May function in angiogenesis of the venous and lymphatic vascular systems during embryogenesis, and also in the maintenance of differentiated lymphatic endothelium in adults. Binds and activates KDR/VEGFR2 and FLT4/VEGFR3 receptors. The chain is Vascular endothelial growth factor C (Vegfc) from Mus musculus (Mouse).